Consider the following 195-residue polypeptide: Pyridoxal 5'-phosphate synthase subunit PdxT (195 aa).

An L-glutamine-binding site is contributed by 46-48; it reads GES. Catalysis depends on C78, which acts as the Nucleophile. L-glutamine contacts are provided by residues R105 and 133-134; that span reads IR. Residues H169 and E171 each act as charge relay system in the active site.

The protein belongs to the glutaminase PdxT/SNO family. As to quaternary structure, in the presence of PdxS, forms a dodecamer of heterodimers. Only shows activity in the heterodimer.

The enzyme catalyses aldehydo-D-ribose 5-phosphate + D-glyceraldehyde 3-phosphate + L-glutamine = pyridoxal 5'-phosphate + L-glutamate + phosphate + 3 H2O + H(+). The catalysed reaction is L-glutamine + H2O = L-glutamate + NH4(+). The protein operates within cofactor biosynthesis; pyridoxal 5'-phosphate biosynthesis. Its function is as follows. Catalyzes the hydrolysis of glutamine to glutamate and ammonia as part of the biosynthesis of pyridoxal 5'-phosphate. The resulting ammonia molecule is channeled to the active site of PdxS. This is Pyridoxal 5'-phosphate synthase subunit PdxT from Geobacillus thermodenitrificans (strain NG80-2).